Consider the following 163-residue polypeptide: 2-C-methyl-D-erythritol 2,4-cyclodiphosphate synthase (163 aa).

2 residues coordinate a divalent metal cation: Asp10 and His12. 4-CDP-2-C-methyl-D-erythritol 2-phosphate contacts are provided by residues 10 to 12 and 36 to 37; these read DVH and HS. His44 serves as a coordination point for a divalent metal cation. 4-CDP-2-C-methyl-D-erythritol 2-phosphate-binding positions include 58–60, 63–67, 134–137, Phe141, and Arg144; these read DIG, FPDND, and TTTE.

Belongs to the IspF family. In terms of assembly, homotrimer. The cofactor is a divalent metal cation.

The enzyme catalyses 4-CDP-2-C-methyl-D-erythritol 2-phosphate = 2-C-methyl-D-erythritol 2,4-cyclic diphosphate + CMP. Its pathway is isoprenoid biosynthesis; isopentenyl diphosphate biosynthesis via DXP pathway; isopentenyl diphosphate from 1-deoxy-D-xylulose 5-phosphate: step 4/6. Functionally, involved in the biosynthesis of isopentenyl diphosphate (IPP) and dimethylallyl diphosphate (DMAPP), two major building blocks of isoprenoid compounds. Catalyzes the conversion of 4-diphosphocytidyl-2-C-methyl-D-erythritol 2-phosphate (CDP-ME2P) to 2-C-methyl-D-erythritol 2,4-cyclodiphosphate (ME-CPP) with a corresponding release of cytidine 5-monophosphate (CMP). This chain is 2-C-methyl-D-erythritol 2,4-cyclodiphosphate synthase, found in Carboxydothermus hydrogenoformans (strain ATCC BAA-161 / DSM 6008 / Z-2901).